Reading from the N-terminus, the 273-residue chain is SPbeta prophage-derived uncharacterized protein YomF (273 aa).

The stretch at 119 to 149 (VIETLQGLIDEAEDTIIRMNERIAECERVTK) forms a coiled coil.

The chain is SPbeta prophage-derived uncharacterized protein YomF (yomF) from Bacillus subtilis (strain 168).